The following is a 290-amino-acid chain: Endoplasmic reticulum-Golgi intermediate compartment protein 1 (290 aa).

Residues 1–27 (MSFDVRRFDIYRKVPKDLTQPTYTGAF) lie on the Cytoplasmic side of the membrane. Residues 28-48 (ISICCCVFMLFLFLSELTGFI) traverse the membrane as a helical segment. At 49 to 254 (ATEIVNELYV…RRRPFYRFIT (206 aa)) the chain is on the lumenal side. Asn74 is a glycosylation site (N-linked (GlcNAc...) asparagine). The chain crosses the membrane as a helical span at residues 255–275 (TICAIIGGTFTVAGIIDSCIF). Residues 276–290 (TASEAWKKIQIGKMS) lie on the Cytoplasmic side of the membrane.

It belongs to the ERGIC family.

It is found in the endoplasmic reticulum membrane. Its subcellular location is the endoplasmic reticulum-Golgi intermediate compartment membrane. It localises to the golgi apparatus membrane. Its function is as follows. Possible role in transport between endoplasmic reticulum and Golgi. This is Endoplasmic reticulum-Golgi intermediate compartment protein 1 (ergic1) from Danio rerio (Zebrafish).